The primary structure comprises 620 residues: MNINLDSAKGTLCKNILIYGYCKYENKGCAFSHRRNNNANSGPGATPAKSVATTPTSDKRKFNVNTPSFQPSTAPVQGLANKFAGLSPKVKDIPVFVPSGTPASPAQSTPSTGNQEQPMPTSTVSNVPERKFNTSTPSFTPSQPIPAPPPQNTSSPPTNPYLMNQPGPPTDMYYQSAYPLQYHLYAPAPPPRLAITHSSHQVDAHSLFIDSELRETLQKRNEATLQSYPGGPEIVDVYHTVVPIAAEGVSKIWKVSSSVYKGVSNVDGNVYALRKIEDFKIINETPFRTIKRWHGLQSANIVKIQDAFTTVAFGSPSLVVAYDYYPNASTLLEQHVNRRLGGRLEPLTEDILWLYLTQLVNAVRTVHKKKLAARSSLDLSKIIVTTNRIRLAAIGMSDILNWEADDAEIARVGLPTYMENLQQEDIRNMARLMVDLTTVMNPVVQNDIFKLKSSGLSTDFVAAVQDLSNTDDLESYIRKHLAIRLLDVVDMLEDSNDYLESQLSTELENARLVRLMTKINFIVDRPEWDNEATAAAAGWTENGPKYLLKLFRDFVFFQTDEMGKPVTDLSRVLVTLNKLDAGIDEKFLLVSRDEKTCIVVSYKEIRDLLESVFRTITRGK.

A C3H1-type zinc finger spans residues 7 to 36 (SAKGTLCKNILIYGYCKYENKGCAFSHRRN). Disordered regions lie at residues 39 to 73 (ANSGPGATPAKSVATTPTSDKRKFNVNTPSFQPST) and 95 to 168 (VFVP…QPGP). 2 stretches are compositionally biased toward polar residues: residues 63 to 73 (NVNTPSFQPST) and 101 to 126 (TPASPAQSTPSTGNQEQPMPTSTVSN). The tract at residues 226-482 (QSYPGGPEIV…LESYIRKHLA (257 aa)) is pseudokinase domain. ATP contacts are provided by residues R274, 323–330 (DYYPNAST), and 380–381 (SK). Residues 483 to 521 (IRLLDVVDMLEDSNDYLESQLSTELENARLVRLMTKINF) adopt a coiled-coil conformation. The segment at 522–620 (IVDRPEWDNE…SVFRTITRGK (99 aa)) is knob domain.

The protein belongs to the protein kinase superfamily. PAN3 family. As to quaternary structure, homodimer. Forms a heterotrimer with a catalytic subunit PAN2 to form the poly(A)-nuclease (PAN) deadenylation complex. Interacts (via PAM-2 motif) with poly(A)-binding protein PAB1 (via PABC domain), conferring substrate specificity of the enzyme complex.

The protein resides in the cytoplasm. Its function is as follows. Regulatory subunit of the poly(A)-nuclease (PAN) deadenylation complex, one of two cytoplasmic mRNA deadenylases involved in mRNA turnover. PAN specifically shortens poly(A) tails of RNA and the activity is stimulated by poly(A)-binding protein PAB1. PAN deadenylation is followed by rapid degradation of the shortened mRNA tails by the CCR4-NOT complex. Deadenylated mRNAs are then degraded by two alternative mechanisms, namely exosome-mediated 3'-5' exonucleolytic degradation, or deadenylation-dependent mRNA decaping and subsequent 5'-3' exonucleolytic degradation by XRN1. May also be involved in post-transcriptional maturation of mRNA poly(A) tails. PAN3 acts as a positive regulator for PAN activity, recruiting the catalytic subunit PAN2 to mRNA via its interaction with RNA and with PAB1. In Meyerozyma guilliermondii (strain ATCC 6260 / CBS 566 / DSM 6381 / JCM 1539 / NBRC 10279 / NRRL Y-324) (Yeast), this protein is PAN2-PAN3 deadenylation complex subunit PAN3.